The chain runs to 492 residues: uncharacterized protein (492 aa).

The next 12 membrane-spanning stretches (helical) occupy residues 13–33, 42–62, 97–117, 150–170, 180–200, 222–242, 258–278, 320–340, 359–379, 391–411, 428–448, and 463–483; these read LGFI…WRFG, GAFL…LMIL, FIIT…LIIL, GILV…SAGI, IMIP…LTLP, VWLS…GILI, AVTV…AVFG, FGIV…VSIV, LLAV…GAGL, GYLL…LFGG, VWWK…VVFL, and TTYV…SVIL.

The protein belongs to the sodium:neurotransmitter symporter (SNF) (TC 2.A.22) family.

It is found in the cell membrane. Functionally, putative sodium-dependent transporter. This is an uncharacterized protein from Methanocaldococcus jannaschii (strain ATCC 43067 / DSM 2661 / JAL-1 / JCM 10045 / NBRC 100440) (Methanococcus jannaschii).